A 238-amino-acid chain; its full sequence is ATP synthase subunit O, mitochondrial (238 aa).

A mitochondrion-targeting transit peptide spans 1–36 (MANRFRSGISFFKTIAVTDSVSSVRSKSLFPALRTY). Position 90 is a phosphothreonine (threonine 90).

It belongs to the ATPase delta chain family. In terms of assembly, F-type ATPases have 2 components, CF(1) - the catalytic core - and CF(0) - the membrane proton channel. CF(1) has five subunits: alpha(3), beta(3), gamma(1), delta(1), epsilon(1). CF(0) has three main subunits: a, b and c.

Its subcellular location is the mitochondrion. The protein resides in the mitochondrion inner membrane. Its function is as follows. Mitochondrial membrane ATP synthase (F(1)F(0) ATP synthase or Complex V) produces ATP from ADP in the presence of a proton gradient across the membrane which is generated by electron transport complexes of the respiratory chain. F-type ATPases consist of two structural domains, F(1) - containing the extramembraneous catalytic core and F(0) - containing the membrane proton channel, linked together by a central stalk and a peripheral stalk. During catalysis, ATP synthesis in the catalytic domain of F(1) is coupled via a rotary mechanism of the central stalk subunits to proton translocation. Part of the complex F(0) domain and the peripheric stalk, which acts as a stator to hold the catalytic alpha(3)beta(3) subcomplex and subunit a/ATP6 static relative to the rotary elements. The sequence is that of ATP synthase subunit O, mitochondrial from Arabidopsis thaliana (Mouse-ear cress).